Consider the following 69-residue polypeptide: Putative membrane protein insertion efficiency factor (69 aa).

The protein belongs to the UPF0161 family.

It localises to the cell inner membrane. Its function is as follows. Could be involved in insertion of integral membrane proteins into the membrane. This Aromatoleum aromaticum (strain DSM 19018 / LMG 30748 / EbN1) (Azoarcus sp. (strain EbN1)) protein is Putative membrane protein insertion efficiency factor.